The chain runs to 626 residues: MSRFVTSVSALAMLALAPAALSSGAYANDKLVELSKSDDNWVMPGKNYDSNNFSDLKQINKGNVKQLRPAWTFSTGLLNGHEGAPLVVDGKMYIHTSFPNNTFALGLDDPGTILWQDKPKQNPAARAVACCDLVNRGLAYWPGDGKTPALILKTQLDGNVAALNAETGETVWKVENSDIKVGSTLTIAPYVVKDKVIIGSSGAELGVRGYLTAYDVKTGEQVWRAYATGPDKDLLLASDFNIKNPHYGQKGLGTGTWEGDAWKIGGGTNWGWYAYDPGTNLIYFGTGNPAPWNETMRPGDNKWTMTIFGRDADTGEAKFGYQKTPHDEWDYAGVNVMMLSEQKDKDGKARKLLTHPDRNGIVYTLDRTDGALVSANKLDDTVNVFKSVDLKTGQPVRDPEYGTRMDHLAKDICPSAMGYHNQGHDSYDPKRELFFMGINHICMDWEPFMLPYRAGQFFVGATLNMYPGPKGDRQNYEGLGQIKAYNAITGDYKWEKMERFAVWGGTMATAGDLVFYGTLDGYLKARDSDTGDLLWKFKIPSGAIGYPMTYTHKGTQYVAIYYGVGGWPGVGLVFDLADPTAGLGAVGAFKKLANYTQMGGGVVVFSLDGKGPYDDPNVGEWKSAAK.

The first 27 residues, 1–27 (MSRFVTSVSALAMLALAPAALSSGAYA), serve as a signal peptide directing secretion. Cysteines 130 and 131 form a disulfide. Residues E204 and N288 each contribute to the Ca(2+) site. D330 (proton acceptor) is an active-site residue. C413 and C442 are disulfide-bonded.

This sequence belongs to the bacterial PQQ dehydrogenase family. As to quaternary structure, heterotetramer composed of 2 alpha and 2 beta subunits. Pyrroloquinoline quinone serves as cofactor. The cofactor is Ca(2+).

Its subcellular location is the cell inner membrane. It carries out the reaction 2 Fe(III)-[cytochrome cL] + a primary alcohol = 2 Fe(II)-[cytochrome cL] + an aldehyde + 2 H(+). In terms of biological role, catalyzes the oxidation of primary alcohols including methanol. The chain is Methanol dehydrogenase [cytochrome c] subunit 1 (moxF) from Methylorubrum extorquens (strain ATCC 14718 / DSM 1338 / JCM 2805 / NCIMB 9133 / AM1) (Methylobacterium extorquens).